The sequence spans 366 residues: Reticulon-4-interacting protein 1, mitochondrial (366 aa).

The N-terminal 20 residues, 1 to 20 (MIEKMILRRFFSTKSSTMRA), are a transit peptide targeting the mitochondrion.

It belongs to the zinc-containing alcohol dehydrogenase family. Quinone oxidoreductase subfamily. In terms of tissue distribution, expressed in pharynx, muscles and intestine.

It is found in the mitochondrion. Plays a role in oxygen metabolism in the mitochondria by regulating the levels of reactive oxygen species (ROS) thereby conferring resistance to oxidative stress. Involved in resistance to P.aeruginosa PA14 infection. Regulates lifespan. This is Reticulon-4-interacting protein 1, mitochondrial from Caenorhabditis elegans.